A 912-amino-acid polypeptide reads, in one-letter code: Non-lysosomal glucosylceramidase (912 aa).

A disordered region spans residues 886–912; it reads HKKNSSRPAVTQGTAPSQPECGPKRSL. Residues 891–902 are compositionally biased toward polar residues; the sequence is SRPAVTQGTAPS.

This sequence belongs to the non-lysosomal glucosylceramidase family.

The protein localises to the endoplasmic reticulum membrane. The protein resides in the golgi apparatus membrane. It carries out the reaction a beta-D-glucosyl-(1&lt;-&gt;1')-N-acylsphing-4-enine + H2O = an N-acylsphing-4-enine + D-glucose. The catalysed reaction is a beta-D-galactosyl-(1&lt;-&gt;1')-N-acylsphing-4-enine + H2O = an N-acylsphing-4-enine + D-galactose. The enzyme catalyses beta-D-glucosyl-(1-&gt;3)-O-lithocholate + H2O = lithocholate + D-glucose. It catalyses the reaction beta-D-glucosyl-(1-&gt;3)-O-chenodeoxycholate + H2O = chenodeoxycholate + D-glucose. It carries out the reaction a di-trans,poly-cis-dolichyl beta-D-glucosyl phosphate + chenodeoxycholate = beta-D-glucosyl-(1-&gt;3)-O-chenodeoxycholate + a di-trans,poly-cis-dolichyl phosphate + H(+). The catalysed reaction is octyl beta-D-glucose + chenodeoxycholate = beta-D-glucosyl-(1-&gt;3)-O-chenodeoxycholate + octan-1-ol. The enzyme catalyses cholesteryl 3-beta-D-glucoside + H2O = cholesterol + D-glucose. It catalyses the reaction a beta-D-glucosyl-(1&lt;-&gt;1')-N-acylsphing-4-enine + cholesterol = cholesteryl 3-beta-D-glucoside + an N-acylsphing-4-enine. It carries out the reaction beta-D-glucosyl-N-(9Z-octadecenoyl)-sphing-4E-enine + cholesterol = N-(9Z-octadecenoyl)-sphing-4-enine + cholesteryl 3-beta-D-glucoside. The catalysed reaction is a beta-D-galactosyl-(1&lt;-&gt;1')-N-acylsphing-4-enine + cholesterol = cholesteryl 3-beta-D-galactoside + an N-acylsphing-4-enine. The enzyme catalyses 1-(beta-D-galactosyl)-N-dodecanoylsphing-4-enine + cholesterol = cholesteryl 3-beta-D-galactoside + N-dodecanoylsphing-4-enine. It functions in the pathway lipid metabolism; sphingolipid metabolism. It participates in steroid metabolism; cholesterol metabolism. Enzymatic activity is dependent on membrane association and requires the presence of lipids. Functionally, non-lysosomal glucosylceramidase that catalyzes the hydrolysis of glucosylceramides/GlcCers (such as beta-D-glucosyl-(1&lt;-&gt;1')-N-acylsphing-4-enine) to free glucose and ceramides (such as N-acylsphing-4-enine). GlcCers are membrane glycosphingolipids that have a wide intracellular distribution. They are the main precursors of more complex glycosphingolipids that play a role in cellular growth, differentiation, adhesion, signaling, cytoskeletal dynamics and membrane properties. Involved in the transglucosylation of cholesterol, transfers glucose from GlcCer to cholesterol, thereby modifying its water solubility and biological properties. Under specific conditions, may catalyze the reverse reaction, transferring glucose from cholesteryl-3-beta-D-glucoside to ceramide (such as N-acylsphing-4-enine). May play a role in the metabolism of bile acids. Able to hydrolyze bile acid 3-O-glucosides as well as to produce bile acid-glucose conjugates thanks to a bile acid glucosyl transferase activity. Catalyzes the hydrolysis of galactosylceramides/GalCers (such as beta-D-galactosyl-(1&lt;-&gt;1')-N-acylsphing-4-enine), as well as the galactosyl transfer between GalCers and cholesterol in vitro with lower activity compared with their activity against GlcCers. This chain is Non-lysosomal glucosylceramidase, found in Rattus norvegicus (Rat).